The chain runs to 268 residues: Mediator of RNA polymerase II transcription subunit 8-A (268 aa).

2 coiled-coil regions span residues M1–L26 and V117–E160. The interval G190–R268 is disordered. The segment covering V223–Q246 has biased composition (polar residues).

This sequence belongs to the Mediator complex subunit 8 family. As to quaternary structure, component of the Mediator complex. May be part of a multisubunit E3 ubiquitin-protein ligase complex.

It localises to the nucleus. Its pathway is protein modification; protein ubiquitination. Component of the Mediator complex, a coactivator involved in the regulated transcription of nearly all RNA polymerase II-dependent genes. Mediator functions as a bridge to convey information from gene-specific regulatory proteins to the basal RNA polymerase II transcription machinery. Mediator is recruited to promoters by direct interactions with regulatory proteins and serves as a scaffold for the assembly of a functional preinitiation complex with RNA polymerase II and the general transcription factors. May play a role as a target recruitment subunit in E3 ubiquitin-protein ligase complexes and thus in ubiquitination and subsequent proteasomal degradation of target proteins. The sequence is that of Mediator of RNA polymerase II transcription subunit 8-A (med8-a) from Xenopus laevis (African clawed frog).